Here is a 564-residue protein sequence, read N- to C-terminus: Arginine--tRNA ligase (564 aa).

Residues 122–132 (PNIAKPFSIGH) carry the 'HIGH' region motif.

It belongs to the class-I aminoacyl-tRNA synthetase family. In terms of assembly, monomer.

It localises to the cytoplasm. The enzyme catalyses tRNA(Arg) + L-arginine + ATP = L-arginyl-tRNA(Arg) + AMP + diphosphate. This Lactococcus lactis subsp. cremoris (strain MG1363) protein is Arginine--tRNA ligase.